Reading from the N-terminus, the 798-residue chain is Transferrin receptor protein 2 (798 aa).

Residues 1 to 81 are Cytoplasmic-facing; the sequence is MEQRWGLLRK…WAAAGRKAAP (81 aa). The short motif at 23-26 is the Endocytosis signal element; sequence YRRV. A disordered region spans residues 25–44; the sequence is RVEGPQLENLEEEDREEGEE. Positions 33–44 are enriched in acidic residues; the sequence is NLEEEDREEGEE. The helical; Signal-anchor for type II membrane protein transmembrane segment at 82–102 threads the bilayer; it reads YLVLTTLLIFTGAFLLGYVAF. The Extracellular portion of the chain corresponds to 103–798; that stretch reads RGSCQACGDS…GDVWNIDNNF (696 aa). N235, N334, and N535 each carry an N-linked (GlcNAc...) asparagine glycan.

The protein belongs to the peptidase M28 family. M28B subfamily. As to quaternary structure, homodimer.

The protein resides in the cell membrane. Functionally, mediates cellular uptake of transferrin-bound iron in a non-iron dependent manner. May be involved in iron metabolism, hepatocyte function and erythrocyte differentiation. In Rattus norvegicus (Rat), this protein is Transferrin receptor protein 2 (Tfr2).